The sequence spans 309 residues: ADP-L-glycero-D-manno-heptose-6-epimerase (309 aa).

NADP(+)-binding positions include 10-11 (MI), 31-32 (DN), lysine 38, lysine 53, 75-79 (EGACS), and asparagine 92. Tyrosine 139 serves as the catalytic Proton acceptor. Lysine 143 contributes to the NADP(+) binding site. A substrate-binding site is contributed by asparagine 168. NADP(+) is bound by residues valine 169 and lysine 177. The active-site Proton acceptor is lysine 177. Substrate-binding positions include serine 179, histidine 186, 200-203 (FDGS), arginine 208, and tyrosine 271.

This sequence belongs to the NAD(P)-dependent epimerase/dehydratase family. HldD subfamily. As to quaternary structure, homopentamer. Requires NADP(+) as cofactor.

It carries out the reaction ADP-D-glycero-beta-D-manno-heptose = ADP-L-glycero-beta-D-manno-heptose. It functions in the pathway nucleotide-sugar biosynthesis; ADP-L-glycero-beta-D-manno-heptose biosynthesis; ADP-L-glycero-beta-D-manno-heptose from D-glycero-beta-D-manno-heptose 7-phosphate: step 4/4. Functionally, catalyzes the interconversion between ADP-D-glycero-beta-D-manno-heptose and ADP-L-glycero-beta-D-manno-heptose via an epimerization at carbon 6 of the heptose. In Serratia proteamaculans (strain 568), this protein is ADP-L-glycero-D-manno-heptose-6-epimerase.